Reading from the N-terminus, the 801-residue chain is Sucrose synthase isoform 2 (801 aa).

A GT-B glycosyltransferase region spans residues 271 to 748 (MIFNVVILSP…GLKRIQEKYT (478 aa)).

This sequence belongs to the glycosyltransferase 1 family. Plant sucrose synthase subfamily. Homotetramer. As to expression, exclusively expressed in flowers.

The enzyme catalyses an NDP-alpha-D-glucose + D-fructose = a ribonucleoside 5'-diphosphate + sucrose + H(+). Sucrose-cleaving enzyme that provides UDP-glucose and fructose for various metabolic pathways. The chain is Sucrose synthase isoform 2 from Daucus carota (Wild carrot).